The chain runs to 508 residues: MRCPKSAVTMRNEELLLSNGTANKMNGALDHSDQPDPDAIKMFVGQIPRSWSEKELKELFEPYGAVYQINVLRDRSQNPPQSKGCCFVTFYTRKAALEAQNALHNIKTLPGMHHPIQMKPADSEKSNAVEDRKLFIGMVSKKCNENDIRVMFSPFGQIEECRILRGPDGLSRGCAFVTFSTRAMAQNAIKAMHQSQTMEGCSSPIVVKFADTQKDKEQRRLQQQLAQQMQQLNTATWGNLTGLGGLTPQYLALLQQATSSSNLGAFSGIQQMAGMNALQLQNLATLAAAAAAAQTSATSTNANPLSTTSSALGALTSPVAASTPNSTAGAAMNSLTSLGTLQGLAGATVGLNNINALAGMAALNGGLGATGLTNGTAGTMDALTQAYSGIQQYAAAALPTLYSQSLLQQQSAAGSQKEGPEGANLFIYHLPQEFGDQDILQMFMPFGNVISAKVFIDKQTNLSKCFGFVSYDNPVSAQAAIQAMNGFQIGMKRLKVQLKRSKNDSKPY.

2 necessary for RNA-binding, TNNT2 exon 5 and NMDA R1 exon 21 inclusion regions span residues 1-283 (MRCP…LQNL) and 357-508 (LAGM…SKPY). RRM domains are found at residues 40-123 (IKMF…PADS), 132-212 (RKLF…FADT), and 423-501 (ANLF…LKRS).

The protein belongs to the CELF/BRUNOL family. As to quaternary structure, interacts with A1CF. As to expression, expressed in frontal cortex. Isoform 1 is expressed in brain and lung. Isoform 2 is expressed in heart, brain, placenta, lung, liver, kidney, skeletal muscle and pancreas. Isoform 4 is expressed in heart, lung, skeletal muscle, kidney and pancreas.

The protein localises to the nucleus. It is found in the cytoplasm. Its function is as follows. RNA-binding protein implicated in the regulation of several post-transcriptional events. Involved in pre-mRNA alternative splicing, mRNA translation and stability. Mediates exon inclusion and/or exclusion in pre-mRNA that are subject to tissue-specific and developmentally regulated alternative splicing. Specifically activates exon 5 inclusion of TNNT2 in embryonic, but not adult, skeletal muscle. Activates TNNT2 exon 5 inclusion by antagonizing the repressive effect of PTB. Acts both as an activator and as a repressor of a pair of coregulated exons: promotes inclusion of the smooth muscle (SM) exon but exclusion of the non-muscle (NM) exon in actinin pre-mRNAs. Promotes inclusion of exonS 21 and exclusion of exon 5 of the NMDA receptor R1 pre-mRNA. Involved in the apoB RNA editing activity. Increases COX2 mRNA stability and inhibits COX2 mRNA translation in epithelial cells after radiation injury. Modulates the cellular apoptosis program by regulating COX2-mediated prostaglandin E2 (PGE2) expression. Binds to (CUG)n triplet repeats in the 3'-UTR of transcripts such as DMPK. Binds to the muscle-specific splicing enhancer (MSE) intronic sites flanking the TNNT2 alternative exon 5. Binds preferentially to UG-rich sequences, in particular UG repeat and UGUU motifs. Binds to apoB mRNA, specifically to AU-rich sequences located immediately upstream of the edited cytidine. Binds AU-rich sequences in the 3'-UTR of COX2 mRNA. Binds to an intronic RNA element responsible for the silencing of exon 21 splicing. Binds to (CUG)n repeats. May be a specific regulator of miRNA biogenesis. Binds to primary microRNA pri-MIR140 and, with CELF1, negatively regulates the processing to mature miRNA. This Homo sapiens (Human) protein is CUGBP Elav-like family member 2 (CELF2).